We begin with the raw amino-acid sequence, 194 residues long: Glycerol-3-phosphate acyltransferase (194 aa).

Transmembrane regions (helical) follow at residues 7–27 (LLMA…YWVC), 59–79 (LTLF…AMLG), 86–106 (GVTA…HFKG), 116–136 (AGLA…AAVV), and 157–177 (AWRL…FILI).

It belongs to the PlsY family. In terms of assembly, probably interacts with PlsX.

Its subcellular location is the cell inner membrane. The enzyme catalyses an acyl phosphate + sn-glycerol 3-phosphate = a 1-acyl-sn-glycero-3-phosphate + phosphate. It participates in lipid metabolism; phospholipid metabolism. In terms of biological role, catalyzes the transfer of an acyl group from acyl-phosphate (acyl-PO(4)) to glycerol-3-phosphate (G3P) to form lysophosphatidic acid (LPA). This enzyme utilizes acyl-phosphate as fatty acyl donor, but not acyl-CoA or acyl-ACP. The sequence is that of Glycerol-3-phosphate acyltransferase from Hahella chejuensis (strain KCTC 2396).